A 194-amino-acid polypeptide reads, in one-letter code: Extracellular globin-E1 (194 aa).

Globin domains lie at 1-45 and 55-194; these read DISH…MGLS and GLSG…LRQA. H150 is a heme b binding site.

Belongs to the globin family. As to quaternary structure, artemia hemoglobin is a dimer of two similar sized subunits. Each subunit represents a globin chain which exists in two forms (alpha and beta), thus making possible three different phenotypes (HB1, alpha(2), HB2, alpha/beta, HB3, beta(2)). The globin chain is a polymer of eight heme-binding covalently linked domains.

This Artemia sp. (Brine shrimp) protein is Extracellular globin-E1.